Reading from the N-terminus, the 737-residue chain is Catalase-peroxidase (737 aa).

The tryptophyl-tyrosyl-methioninium (Trp-Tyr) (with M-245) cross-link spans 89 to 219; sequence WHSAGTYRVF…LAASHMGLIY (131 aa). The Proton acceptor role is filled by His90. Residues 219-245 constitute a cross-link (tryptophyl-tyrosyl-methioninium (Tyr-Met) (with W-89)); it reads YVNPEGPNGNPDPKAAARDIRVTFGRM. His260 is a heme b binding site.

This sequence belongs to the peroxidase family. Peroxidase/catalase subfamily. Homodimer or homotetramer. Heme b is required as a cofactor. Formation of the three residue Trp-Tyr-Met cross-link is important for the catalase, but not the peroxidase activity of the enzyme.

The protein resides in the cytoplasm. The enzyme catalyses H2O2 + AH2 = A + 2 H2O. It carries out the reaction 2 H2O2 = O2 + 2 H2O. Bifunctional enzyme with both catalase and broad-spectrum peroxidase activity. The protein is Catalase-peroxidase of Aspergillus terreus (strain NIH 2624 / FGSC A1156).